Here is a 37-residue protein sequence, read N- to C-terminus: Large ribosomal subunit protein bL36c (37 aa).

It belongs to the bacterial ribosomal protein bL36 family.

The protein localises to the plastid. It localises to the chloroplast. The polypeptide is Large ribosomal subunit protein bL36c (Cryptomeria japonica (Japanese cedar)).